A 439-amino-acid chain; its full sequence is GTPase Der (439 aa).

EngA-type G domains lie at alanine 4 to glutamate 169 and isoleucine 177 to asparagine 352. GTP is bound by residues glycine 10–serine 17, aspartate 57–leucine 61, asparagine 120–aspartate 123, glycine 183–serine 190, aspartate 230–isoleucine 234, and asparagine 295–aspartate 298. The KH-like domain maps to lysine 353–glycine 437.

The protein belongs to the TRAFAC class TrmE-Era-EngA-EngB-Septin-like GTPase superfamily. EngA (Der) GTPase family. As to quaternary structure, associates with the 50S ribosomal subunit.

Its function is as follows. GTPase that plays an essential role in the late steps of ribosome biogenesis. The chain is GTPase Der from Thermoanaerobacter pseudethanolicus (strain ATCC 33223 / 39E) (Clostridium thermohydrosulfuricum).